Reading from the N-terminus, the 270-residue chain is Formamidopyrimidine-DNA glycosylase (270 aa).

The active-site Schiff-base intermediate with DNA is P2. E3 serves as the catalytic Proton donor. K58 (proton donor; for beta-elimination activity) is an active-site residue. DNA is bound by residues H91, R110, and R151. The FPG-type zinc finger occupies 236-270; the sequence is FVYGRGGENCKVCGTGLREIKLGQRASVYCPRCQS. The active-site Proton donor; for delta-elimination activity is R260.

It belongs to the FPG family. Monomer. It depends on Zn(2+) as a cofactor.

The enzyme catalyses Hydrolysis of DNA containing ring-opened 7-methylguanine residues, releasing 2,6-diamino-4-hydroxy-5-(N-methyl)formamidopyrimidine.. The catalysed reaction is 2'-deoxyribonucleotide-(2'-deoxyribose 5'-phosphate)-2'-deoxyribonucleotide-DNA = a 3'-end 2'-deoxyribonucleotide-(2,3-dehydro-2,3-deoxyribose 5'-phosphate)-DNA + a 5'-end 5'-phospho-2'-deoxyribonucleoside-DNA + H(+). Involved in base excision repair of DNA damaged by oxidation or by mutagenic agents. Acts as a DNA glycosylase that recognizes and removes damaged bases. Has a preference for oxidized purines, such as 7,8-dihydro-8-oxoguanine (8-oxoG). Has AP (apurinic/apyrimidinic) lyase activity and introduces nicks in the DNA strand. Cleaves the DNA backbone by beta-delta elimination to generate a single-strand break at the site of the removed base with both 3'- and 5'-phosphates. This chain is Formamidopyrimidine-DNA glycosylase, found in Pseudomonas fluorescens (strain ATCC BAA-477 / NRRL B-23932 / Pf-5).